A 116-amino-acid polypeptide reads, in one-letter code: Large ribosomal subunit protein uL18 (116 aa).

This sequence belongs to the universal ribosomal protein uL18 family. As to quaternary structure, part of the 50S ribosomal subunit; part of the 5S rRNA/L5/L18/L25 subcomplex. Contacts the 5S and 23S rRNAs.

This is one of the proteins that bind and probably mediate the attachment of the 5S RNA into the large ribosomal subunit, where it forms part of the central protuberance. This chain is Large ribosomal subunit protein uL18, found in Pseudomonas fluorescens (strain ATCC BAA-477 / NRRL B-23932 / Pf-5).